We begin with the raw amino-acid sequence, 209 residues long: MTQASAKFIVVEGLEGAGKSSAIALIRDFIEKHTGLAPVCTREPGGTPLAERIRDLVKIADPSDPLCDESECLLIYAARAQLVANVIKPALAEGKWVLGDRHNLSSLAYQGGGRGLMPLVEAVSNATLKGFKPDLTLYLDLDPKLGLQRAAKRGELDRIEQQAIDFFERARATYLKLASEDEQIVVIDASQTMAEVHKDILAVLQAMAW.

13 to 20 (GLEGAGKS) lines the ATP pocket.

This sequence belongs to the thymidylate kinase family.

The catalysed reaction is dTMP + ATP = dTDP + ADP. In terms of biological role, phosphorylation of dTMP to form dTDP in both de novo and salvage pathways of dTTP synthesis. The protein is Thymidylate kinase of Shewanella sp. (strain MR-4).